A 1507-amino-acid chain; its full sequence is ABC multidrug transporter SNQ2 (1507 aa).

Positions 1 to 73 (MSSSSEISVA…RSSTAELSPE (73 aa)) are disordered. Positions 41–55 (RSHEDADGDDAHSDN) are enriched in basic and acidic residues. N-linked (GlcNAc...) asparagine glycans are attached at residues N55 and N336. The region spanning 157–412 (CLPYTIYKAI…FYRMGYECPP (256 aa)) is the ABC transporter 1 domain. Transmembrane regions (helical) follow at residues 522–542 (AYTV…GSLY), 556–576 (GGVL…NLSF), and 605–625 (FPFR…LSGL). N626 carries an N-linked (GlcNAc...) asparagine glycan. The chain crosses the membrane as a helical span at residues 635-655 (VYLFLTMCSESINALFELIAA). N-linked (GlcNAc...) asparagine glycosylation is present at N659. 2 consecutive transmembrane segments (helical) span residues 665 to 685 (SISG…IQLP) and 773 to 793 (FGIM…ITEI). In terms of domain architecture, ABC transporter 2 spans 857–1099 (FIWRNVCYTI…LLSYFERNGA (243 aa)). N-linked (GlcNAc...) asparagine glycosylation occurs at N878. ATP is bound at residue 893 to 900 (GESGAGKT). The next 3 membrane-spanning stretches (helical) occupy residues 1193–1213 (YIMS…FTFY), 1220–1240 (TGLQ…APAM), and 1270–1290 (LITQ…IFFV). N1311 carries an N-linked (GlcNAc...) asparagine glycan. The next 2 helical transmembrane spans lie at 1314–1334 (IMFQ…APNL) and 1339–1359 (VILG…QPVS). Residue N1428 is glycosylated (N-linked (GlcNAc...) asparagine). The chain crosses the membrane as a helical span at residues 1459-1479 (FGLYWAYIGFNICAMVAIYYI).

It belongs to the ABC transporter superfamily. ABCG family. PDR (TC 3.A.1.205) subfamily.

The protein localises to the cell membrane. Its function is as follows. ABC multidrug transporter involved in the response to azoles such as fluconazole, itraconazole, ketoconazole and voriconazole and contributes to the development of PDR1-dependent azole resistance. Plays a role in biofilm tolerance to fluconazole. Also confers resistance to 4-nitroquinoline-N-oxide (4-NQO). The chain is ABC multidrug transporter SNQ2 from Candida glabrata (strain ATCC 2001 / BCRC 20586 / JCM 3761 / NBRC 0622 / NRRL Y-65 / CBS 138) (Yeast).